The sequence spans 512 residues: rRNA N(6)-adenosine-methyltransferase ZCCHC4 (512 aa).

8 residues coordinate Zn(2+): C39, H41, C63, C72, C124, C127, H139, and H142. A GRF-type zinc finger spans residues 39–81 (CPHGPTLLFVKVNQGKEETRKFYACSACRDRKDCNFFQWEDEK). Residues 171–174 (QYLF), R201, D223, 241–242 (NM), and D274 contribute to the S-adenosyl-L-methionine site. The segment at 335 to 355 (QVDYDNHALYKHGKTGRKQSP) is regulatory loop. 16 residues coordinate Zn(2+): C378, C381, H391, C392, C395, C398, H408, C409, C412, C415, H422, C423, C426, C429, H434, and C436. Residues 393–445 (VHCNSCTSKDGRKWSHCFLCKKCVKPSWIHCNTCNRCALPDHSCLGPKDGCFI) form the DHHC domain. The CCHC-type zinc finger occupies 441-458 (DGCFICGALDHKRSNCPN).

This sequence belongs to the ZCCHC4 family. Interacts with components of the ASC-1 complex TRIP4, ASCC1, ASCC2 and ASCC3. Interact with AHCYL1 and AHCYL2. Interact with YTHDC2.

The protein resides in the cytoplasm. The protein localises to the nucleus. It localises to the nucleolus. The catalysed reaction is adenosine(4220) in 28S rRNA + S-adenosyl-L-methionine = N(6)-methyladenosine(4220) in 28S rRNA + S-adenosyl-L-homocysteine + H(+). Its function is as follows. rRNA N6-methyltransferase that specifically methylates the adenine in position 4220 of 28S rRNA. N6-methylation of adenine(4220) in 28S rRNA is required for translation. The polypeptide is rRNA N(6)-adenosine-methyltransferase ZCCHC4 (Mus musculus (Mouse)).